The sequence spans 876 residues: Leucine--tRNA ligase (876 aa).

The 'HIGH' region motif lies at 43 to 53 (PYPSGRIHMGH). The 'KMSKS' region motif lies at 632–636 (KMSKS). Lys-635 is a binding site for ATP.

Belongs to the class-I aminoacyl-tRNA synthetase family.

The protein localises to the cytoplasm. It catalyses the reaction tRNA(Leu) + L-leucine + ATP = L-leucyl-tRNA(Leu) + AMP + diphosphate. This Sinorhizobium medicae (strain WSM419) (Ensifer medicae) protein is Leucine--tRNA ligase.